Consider the following 111-residue polypeptide: Large ribosomal subunit protein uL22 (111 aa).

The protein belongs to the universal ribosomal protein uL22 family. In terms of assembly, part of the 50S ribosomal subunit.

Functionally, this protein binds specifically to 23S rRNA; its binding is stimulated by other ribosomal proteins, e.g. L4, L17, and L20. It is important during the early stages of 50S assembly. It makes multiple contacts with different domains of the 23S rRNA in the assembled 50S subunit and ribosome. The globular domain of the protein is located near the polypeptide exit tunnel on the outside of the subunit, while an extended beta-hairpin is found that lines the wall of the exit tunnel in the center of the 70S ribosome. The protein is Large ribosomal subunit protein uL22 of Protochlamydia amoebophila (strain UWE25).